The primary structure comprises 753 residues: Polyribonucleotide nucleotidyltransferase (753 aa).

The Mg(2+) site is built by Asp543 and Asp549. In terms of domain architecture, KH spans Pro609–Ile668. In terms of domain architecture, S1 motif spans Gly680–Val749.

This sequence belongs to the polyribonucleotide nucleotidyltransferase family. Mg(2+) serves as cofactor.

The protein resides in the cytoplasm. It carries out the reaction RNA(n+1) + phosphate = RNA(n) + a ribonucleoside 5'-diphosphate. Its function is as follows. Involved in mRNA degradation. Catalyzes the phosphorolysis of single-stranded polyribonucleotides processively in the 3'- to 5'-direction. This is Polyribonucleotide nucleotidyltransferase from Corynebacterium glutamicum (strain ATCC 13032 / DSM 20300 / JCM 1318 / BCRC 11384 / CCUG 27702 / LMG 3730 / NBRC 12168 / NCIMB 10025 / NRRL B-2784 / 534).